The primary structure comprises 783 residues: Cadherin-5 (783 aa).

Positions 1 to 25 are cleaved as a signal peptide; that stretch reads MQALVMLLATGATYYLGLLAAAAAA. Positions 26 to 45 are excised as a propeptide; that stretch reads VNPGRPNTPGSLPAHRRQKR. Cadherin domains follow at residues 44-149, 150-256, 257-371, 372-478, and 478-585; these read KRDW…WPVF, THRV…FPIF, TQNR…PPIF, QQPF…APEF, and FAKP…GEFT. The Extracellular portion of the chain corresponds to 46 to 599; the sequence is DWIWNQMHID…AAAQVGISIQ (554 aa). Ca(2+)-binding residues include E56 and E57. A glycan (N-linked (GlcNAc...) asparagine) is linked at N59. Ca(2+) is bound by residues D107, E109, D141, V142, N143, D144, and N145. The N-linked (GlcNAc...) asparagine glycan is linked to N155. Residues D175, D177, H184, and D229 each coordinate Ca(2+). Residues N361, N441, and N523 are each glycosylated (N-linked (GlcNAc...) asparagine). A helical membrane pass occupies residues 600–620; sequence ALVAIFLCILTFTVITLLIIL. Residues 621–660 are required for interaction with PALS1; it reads RRRLRKQARAHGKSVPEIHEQLVTYDEEGGGEMDTTSYDV. The Cytoplasmic segment spans residues 621-783; sequence RRRLRKQARA…GSDPQEELVY (163 aa).

Part of a complex composed of AMOTL2, MAGI1 and CDH5, within the complex AMOTL2 acts as a scaffold protein for the interaction of MAGI1 with CDH5. The complex is required for coupling actin fibers to cell junctions in endothelial cells. Within the complex AMOTL2 (via its N-terminus) interacts with CDH5. Interacts (via cadherin 5 domain) with PTPRB. Interacts with TRPC4. Interacts with KRIT1. Interacts with PARD3. Interacts with RTN4 (isoform B). Interacts with PALS1; the interaction promotes PALS1 localization to cell junctions and is required for CDH5-mediated vascular lumen formation and endothelial cell. Interacts with CTNND1/p120-catenin; the interaction controls CADH5 endocytosis. In terms of processing, phosphorylated on tyrosine residues by KDR/VEGFR-2. Dephosphorylated by PTPRB. Post-translationally, O-glycosylated.

The protein resides in the cell junction. It is found in the adherens junction. It localises to the cell membrane. Its subcellular location is the cytoplasm. Its function is as follows. Cadherins are calcium-dependent cell adhesion proteins. They preferentially interact with themselves in a homophilic manner in connecting cells; cadherins may thus contribute to the sorting of heterogeneous cell types. This cadherin may play a important role in endothelial cell biology through control of the cohesion and organization of the intercellular junctions. It associates with alpha-catenin forming a link to the cytoskeleton. Plays a role in coupling actin fibers to cell junctions in endothelial cells, via acting as a cell junctional complex anchor for AMOTL2 and MAGI1. Acts in concert with KRIT1 and PALS1 to establish and maintain correct endothelial cell polarity and vascular lumen. These effects are mediated by recruitment and activation of the Par polarity complex and RAP1B. Required for activation of PRKCZ and for localization of phosphorylated PRKCZ, PARD3, TIAM1 and RAP1B to the cell junction. Associates with CTNND1/p120-catenin to control CADH5 endocytosis. The polypeptide is Cadherin-5 (Bos taurus (Bovine)).